The following is a 189-amino-acid chain: MSEIKMPEFLTVESALKDSGLAVTPSELHGLLVGMISGGLSLDDQTWKPLIYDYTNDGMGWPDSAIKVGSAVFQCTVAELTAEKLALELLIPSEKESLMNRADGLSEWVNHFISGLGLVELKLDKTSDALKEALADLEEIARLGIDEDDDLEEQENLFEQIVEHVRICVLTIHAELGQQIHTDASKTVH.

Belongs to the UPF0149 family.

The polypeptide is UPF0149 protein VFMJ11_2207 (Aliivibrio fischeri (strain MJ11) (Vibrio fischeri)).